A 339-amino-acid chain; its full sequence is Ketol-acid reductoisomerase (NADP(+)) (339 aa).

The region spanning 1 to 182 (MRVYYDRDAD…GGGRSGIIET (182 aa)) is the KARI N-terminal Rossmann domain. NADP(+) contacts are provided by residues 24 to 27 (YGSQ), Lys-48, Ser-51, Thr-53, and 83 to 86 (DELQ). Residue His-108 is part of the active site. An NADP(+)-binding site is contributed by Gly-134. In terms of domain architecture, KARI C-terminal knotted spans 183-328 (NFREECETDL…AKLRGMMPWI (146 aa)). Residues Asp-191, Glu-195, Glu-227, and Glu-231 each coordinate Mg(2+). Ser-252 provides a ligand contact to substrate.

Belongs to the ketol-acid reductoisomerase family. Mg(2+) is required as a cofactor.

It carries out the reaction (2R)-2,3-dihydroxy-3-methylbutanoate + NADP(+) = (2S)-2-acetolactate + NADPH + H(+). The enzyme catalyses (2R,3R)-2,3-dihydroxy-3-methylpentanoate + NADP(+) = (S)-2-ethyl-2-hydroxy-3-oxobutanoate + NADPH + H(+). It participates in amino-acid biosynthesis; L-isoleucine biosynthesis; L-isoleucine from 2-oxobutanoate: step 2/4. Its pathway is amino-acid biosynthesis; L-valine biosynthesis; L-valine from pyruvate: step 2/4. In terms of biological role, involved in the biosynthesis of branched-chain amino acids (BCAA). Catalyzes an alkyl-migration followed by a ketol-acid reduction of (S)-2-acetolactate (S2AL) to yield (R)-2,3-dihydroxy-isovalerate. In the isomerase reaction, S2AL is rearranged via a Mg-dependent methyl migration to produce 3-hydroxy-3-methyl-2-ketobutyrate (HMKB). In the reductase reaction, this 2-ketoacid undergoes a metal-dependent reduction by NADPH to yield (R)-2,3-dihydroxy-isovalerate. The polypeptide is Ketol-acid reductoisomerase (NADP(+)) (Rhizobium rhizogenes (strain K84 / ATCC BAA-868) (Agrobacterium radiobacter)).